The chain runs to 434 residues: Perilipin-3 (434 aa).

The disordered stretch occupies residues 1–22; it reads MSADGAEADGSTQVTVEEPVQQ. N-acetylserine is present on serine 2. Residue serine 31 is modified to Phosphoserine. The residue at position 65 (lysine 65) is an N6-acetyllysine. Residue serine 91 is modified to Phosphoserine. Lysine 122 participates in a covalent cross-link: Glycyl lysine isopeptide (Lys-Gly) (interchain with G-Cter in SUMO1). Phosphoserine is present on residues serine 130 and serine 148. Threonine 170 carries the phosphothreonine modification. Residues serine 175 and serine 179 each carry the phosphoserine modification. Threonine 216 carries the phosphothreonine modification. Serine 217 and serine 241 each carry phosphoserine. A Phosphotyrosine modification is found at tyrosine 251. 2 coiled-coil regions span residues 252 to 280 and 353 to 377; these read EHSL…SLME and TNVK…SSIH.

This sequence belongs to the perilipin family. Homooligomer. Interacts with M6PR (via the cytoplasmic domain). Interacts with IGF2R (via the cytoplasmic domain). Post-translationally, phosphorylation at Tyr-251 by isoform 1 of CHKA (CHKalpha2) promotes dissociation from lipid droplets: dissociation is followed by recruitment of autophagosome machinery to lipid droplets and subsequent lipid droplet lipolysis.

It is found in the lipid droplet. The protein localises to the endosome membrane. It localises to the cytoplasm. Structural component of lipid droplets, which is required for the formation and maintenance of lipid storage droplets. Required for the transport of mannose 6-phosphate receptors (MPR) from endosomes to the trans-Golgi network. The chain is Perilipin-3 (PLIN3) from Pongo abelii (Sumatran orangutan).